A 292-amino-acid chain; its full sequence is Altered inheritance of mitochondria protein 36, mitochondrial (292 aa).

The transit peptide at 1-26 (MFARLVPRLQPQLLSKRVLTARYPML) directs the protein to the mitochondrion. The helical transmembrane segment at 56 to 75 (VIRYLFYMLVASWVAIYFVA) threads the bilayer.

This sequence belongs to the AIM36 family.

The protein localises to the mitochondrion membrane. This is Altered inheritance of mitochondria protein 36, mitochondrial (AIM36) from Candida albicans (strain SC5314 / ATCC MYA-2876) (Yeast).